Reading from the N-terminus, the 593-residue chain is SPI-1 type 3 secretion system translocon protein SctE (593 aa).

2 coiled-coil regions span residues 151-208 (DTAK…ATDA) and 287-314 (EGRQAEMEKKSAEFQEETRKAEETNRIM). 2 helical membrane passes run 330–350 (VVAAVFTGGASLALAAVGLAV) and 409–429 (IVGAIVAAIAMVAVIVVVAVV).

It belongs to the SctE/SipB/YopB family. In terms of assembly, the core secretion machinery of the T3SS is composed of approximately 20 different proteins, including cytoplasmic components, a base, an export apparatus and a needle. This subunit is involved in the formation of a pore, called the translocon, in host membrane.

The protein resides in the secreted. It localises to the host membrane. Component of the type III secretion system 1 (SPI-1 T3SS), also called injectisome, which is used to inject bacterial effector proteins into eukaryotic host cells. SipB/SctE1 and SipC/SctB are inserted into the host membrane where they form a pore and allow the translocation of effector proteins into the cytosol of target cells. The polypeptide is SPI-1 type 3 secretion system translocon protein SctE (Salmonella dublin).